We begin with the raw amino-acid sequence, 519 residues long: Putative tyrosine carboxypeptidase MATCAP2 (519 aa).

A disordered region spans residues Ser63–Ala103. His330 contributes to the Zn(2+) binding site. The active-site Nucleophile is Glu331. Zn(2+) is bound by residues His335 and Glu366.

Zn(2+) serves as cofactor.

Functionally, putative tyrosine carboxypeptidase. In Mus musculus (Mouse), this protein is Putative tyrosine carboxypeptidase MATCAP2.